The sequence spans 75 residues: Exodeoxyribonuclease 7 small subunit (75 aa).

The protein belongs to the XseB family. In terms of assembly, heterooligomer composed of large and small subunits.

The protein resides in the cytoplasm. It carries out the reaction Exonucleolytic cleavage in either 5'- to 3'- or 3'- to 5'-direction to yield nucleoside 5'-phosphates.. Functionally, bidirectionally degrades single-stranded DNA into large acid-insoluble oligonucleotides, which are then degraded further into small acid-soluble oligonucleotides. This is Exodeoxyribonuclease 7 small subunit from Anaplasma phagocytophilum (strain HZ).